Reading from the N-terminus, the 385-residue chain is 8-amino-7-oxononanoate synthase (385 aa).

Arg-21 lines the substrate pocket. 108-109 (GF) is a binding site for pyridoxal 5'-phosphate. His-133 is a substrate binding site. Positions 179, 207, and 233 each coordinate pyridoxal 5'-phosphate. Lys-236 carries the post-translational modification N6-(pyridoxal phosphate)lysine. Position 352 (Thr-352) interacts with substrate.

Belongs to the class-II pyridoxal-phosphate-dependent aminotransferase family. BioF subfamily. In terms of assembly, homodimer. It depends on pyridoxal 5'-phosphate as a cofactor.

The enzyme catalyses 6-carboxyhexanoyl-[ACP] + L-alanine + H(+) = (8S)-8-amino-7-oxononanoate + holo-[ACP] + CO2. It functions in the pathway cofactor biosynthesis; biotin biosynthesis. Catalyzes the decarboxylative condensation of pimeloyl-[acyl-carrier protein] and L-alanine to produce 8-amino-7-oxononanoate (AON), [acyl-carrier protein], and carbon dioxide. The sequence is that of 8-amino-7-oxononanoate synthase from Salmonella paratyphi A (strain ATCC 9150 / SARB42).